Reading from the N-terminus, the 300-residue chain is tRNA dimethylallyltransferase (300 aa).

18–25 (GPTATGKS) contacts ATP. 20-25 (TATGKS) is a substrate binding site. Residues 43 to 46 (DSRQ) form an interaction with substrate tRNA region.

The protein belongs to the IPP transferase family. Monomer. Mg(2+) is required as a cofactor.

It carries out the reaction adenosine(37) in tRNA + dimethylallyl diphosphate = N(6)-dimethylallyladenosine(37) in tRNA + diphosphate. Functionally, catalyzes the transfer of a dimethylallyl group onto the adenine at position 37 in tRNAs that read codons beginning with uridine, leading to the formation of N6-(dimethylallyl)adenosine (i(6)A). The sequence is that of tRNA dimethylallyltransferase from Cyanothece sp. (strain PCC 7425 / ATCC 29141).